An 89-amino-acid polypeptide reads, in one-letter code: Small ribosomal subunit protein uS15 (89 aa).

This sequence belongs to the universal ribosomal protein uS15 family. Part of the 30S ribosomal subunit. Forms a bridge to the 50S subunit in the 70S ribosome, contacting the 23S rRNA.

In terms of biological role, one of the primary rRNA binding proteins, it binds directly to 16S rRNA where it helps nucleate assembly of the platform of the 30S subunit by binding and bridging several RNA helices of the 16S rRNA. Its function is as follows. Forms an intersubunit bridge (bridge B4) with the 23S rRNA of the 50S subunit in the ribosome. The sequence is that of Small ribosomal subunit protein uS15 from Agrobacterium fabrum (strain C58 / ATCC 33970) (Agrobacterium tumefaciens (strain C58)).